A 1006-amino-acid chain; its full sequence is Unconventional myosin-Id (1006 aa).

N-acetylalanine is present on Ala2. The Myosin motor domain maps to 9-695; that stretch reads FGKADFVLMD…TLFTLEELRA (687 aa). Position 102 to 109 (102 to 109) interacts with ATP; the sequence is GESGAGKT. At Ser200 the chain carries Phosphoserine. Phosphotyrosine is present on Tyr536. The interval 572 to 594 is actin-binding; sequence MIALVDNLASKEPYYVRCIKPND. 2 IQ domains span residues 699 to 719 and 721 to 741; these read VRVV…MRYK and TKAA…SYIH. The interaction with calmodulin stretch occupies residues 776–896; it reads LQSIFNRWRA…MDPTKQYKVM (121 aa). Residues 812 to 1005 enclose the TH1 domain; that stretch reads GQRADLGLQR…RSGFILSVPG (194 aa).

Belongs to the TRAFAC class myosin-kinesin ATPase superfamily. Myosin family. Interacts (via the two IQ motifs) with calmodulin. Binds an additional calmodulin chain via a third, C-terminal region. Interacts with F-actin. Detected on tracheal epithelial cells, and on epithelial cells and brush border cells in duodenum, jejunum and ileum. Detected on myelinated white matter in the cerebellum, and the myelinated part of the optic nerve. Detected on mature oligodendrocites. Detected on the outside of the myelin sheet that surrounds axons (at protein level). Ubiquitous. Highest levels in adult brain, and spinal cord. Moderate levels in lung, kidney, liver and spleen. Low levels in testis and heart (at protein level).

It localises to the cytoplasm. The protein localises to the perikaryon. It is found in the cell projection. The protein resides in the dendrite. Its subcellular location is the early endosome. It localises to the cell cortex. Its function is as follows. Unconventional myosin that functions as actin-based motor protein with ATPase activity. Plays a role in endosomal protein trafficking, and especially in the transfer of cargo proteins from early to recycling endosomes. Required for normal planar cell polarity in ciliated tracheal cells, for normal rotational polarity of cilia, and for coordinated, unidirectional ciliary movement in the trachea. Required for normal, polarized cilia organization in brain ependymal epithelial cells. The sequence is that of Unconventional myosin-Id (Myo1d) from Rattus norvegicus (Rat).